A 298-amino-acid polypeptide reads, in one-letter code: Tyrosine recombinase XerC (298 aa).

Positions 1-85 (MKPIAAFQEY…SLRSFYRYLT (85 aa)) constitute a Core-binding (CB) domain. A Tyr recombinase domain is found at 106 to 291 (HLPQFFYEAE…TMAHLKNEYM (186 aa)). Residues arginine 146, lysine 170, histidine 243, arginine 246, and histidine 269 contribute to the active site. The O-(3'-phospho-DNA)-tyrosine intermediate role is filled by tyrosine 278.

The protein belongs to the 'phage' integrase family. XerC subfamily. Forms a cyclic heterotetrameric complex composed of two molecules of XerC and two molecules of XerD.

It localises to the cytoplasm. Its function is as follows. Site-specific tyrosine recombinase, which acts by catalyzing the cutting and rejoining of the recombining DNA molecules. The XerC-XerD complex is essential to convert dimers of the bacterial chromosome into monomers to permit their segregation at cell division. It also contributes to the segregational stability of plasmids. The protein is Tyrosine recombinase XerC of Lacticaseibacillus paracasei (strain ATCC 334 / BCRC 17002 / CCUG 31169 / CIP 107868 / KCTC 3260 / NRRL B-441) (Lactobacillus paracasei).